We begin with the raw amino-acid sequence, 63 residues long: UPF0391 membrane protein lpg2415 (63 aa).

The next 2 membrane-spanning stretches (helical) occupy residues 4 to 24 (WALI…RGVA) and 33 to 53 (VLFF…LLGG).

It belongs to the UPF0391 family.

The protein localises to the cell membrane. This chain is UPF0391 membrane protein lpg2415, found in Legionella pneumophila subsp. pneumophila (strain Philadelphia 1 / ATCC 33152 / DSM 7513).